The sequence spans 258 residues: tRNA pseudouridine synthase A (258 aa).

Catalysis depends on aspartate 52, which acts as the Nucleophile. Tyrosine 110 is a substrate binding site.

It belongs to the tRNA pseudouridine synthase TruA family. As to quaternary structure, homodimer.

The enzyme catalyses uridine(38/39/40) in tRNA = pseudouridine(38/39/40) in tRNA. Formation of pseudouridine at positions 38, 39 and 40 in the anticodon stem and loop of transfer RNAs. In Francisella philomiragia subsp. philomiragia (strain ATCC 25017 / CCUG 19701 / FSC 153 / O#319-036), this protein is tRNA pseudouridine synthase A.